The sequence spans 538 residues: MAGELKVLNALDSAKTQWYHFTAIVIAGMGFFTDAYDLFSISLVTKLLGRIYYFNPASKSPGSLPPNVSAAVNGVAFCGTLAGQLFFGWLGDKMGRKKVYGMTLMLMVICCLASGLSFGSSAKGVMATLCFFRFWLGFGIGGDYPLSATIMSEYANKRTRGAFIAAVFAMQGFGNLTGGIVAIIVSAAFKSRFDAPAYRDDRTGSTVPQADYAWRIVLMFGAIPALLTYYWRMKMPETARYTALVAKNAKQAAADMTQVLNVEIVEEQEKADEVARREQFGLFSRQFLRRHGRHLLGTTVCWFVLDIAFYSSNLFQKDIYTAVQWLPKADTMSALEEMFKISRAQTLVALCGTIPGYWFTVFFIDIIGRFVIQLGGFFFMTAFMLGLAVPYHHWTTPGNHIGFVVMYAFTFFFANFGPNSTTFIVPAEIFPARLRSTCHGISAAAGKAGAIVGSFGFLYAAQSTDASKTDAGYPPGIGVRNSLFFLAGCNVIGFFFTFLVPESKGKSLEELSGENEDDDDVPEAPATADHRTAPAPPA.

Topologically, residues 1-23 (MAGELKVLNALDSAKTQWYHFTA) are cytoplasmic. The chain crosses the membrane as a helical span at residues 24–44 (IVIAGMGFFTDAYDLFSISLV). Topologically, residues 45–69 (TKLLGRIYYFNPASKSPGSLPPNVS) are extracellular. Residues 70 to 90 (AAVNGVAFCGTLAGQLFFGWL) form a helical membrane-spanning segment. The Cytoplasmic portion of the chain corresponds to 91–98 (GDKMGRKK). Residues 99–119 (VYGMTLMLMVICCLASGLSFG) form a helical membrane-spanning segment. Over 120–123 (SSAK) the chain is Extracellular. A helical transmembrane segment spans residues 124–144 (GVMATLCFFRFWLGFGIGGDY). Over 145-163 (PLSATIMSEYANKRTRGAF) the chain is Cytoplasmic. A helical transmembrane segment spans residues 164–184 (IAAVFAMQGFGNLTGGIVAII). At 185–210 (VSAAFKSRFDAPAYRDDRTGSTVPQA) the chain is on the extracellular side. A helical transmembrane segment spans residues 211–231 (DYAWRIVLMFGAIPALLTYYW). Residues 232–294 (RMKMPETARY…RQFLRRHGRH (63 aa)) lie on the Cytoplasmic side of the membrane. A helical membrane pass occupies residues 295-315 (LLGTTVCWFVLDIAFYSSNLF). At 316-346 (QKDIYTAVQWLPKADTMSALEEMFKISRAQT) the chain is on the extracellular side. Residues 347–367 (LVALCGTIPGYWFTVFFIDII) traverse the membrane as a helical segment. The Cytoplasmic segment spans residues 368–369 (GR). Residues 370 to 390 (FVIQLGGFFFMTAFMLGLAVP) form a helical membrane-spanning segment. Over 391–396 (YHHWTT) the chain is Extracellular. The helical transmembrane segment at 397–417 (PGNHIGFVVMYAFTFFFANFG) threads the bilayer. The Cytoplasmic segment spans residues 418–440 (PNSTTFIVPAEIFPARLRSTCHG). A helical membrane pass occupies residues 441–461 (ISAAAGKAGAIVGSFGFLYAA). Residues 462 to 481 (QSTDASKTDAGYPPGIGVRN) are Extracellular-facing. A helical transmembrane segment spans residues 482-502 (SLFFLAGCNVIGFFFTFLVPE). The Cytoplasmic portion of the chain corresponds to 503 to 538 (SKGKSLEELSGENEDDDDVPEAPATADHRTAPAPPA). A disordered region spans residues 507 to 538 (SLEELSGENEDDDDVPEAPATADHRTAPAPPA). The span at 511–522 (LSGENEDDDDVP) shows a compositional bias: acidic residues.

This sequence belongs to the major facilitator superfamily. Phosphate:H(+) symporter (TC 2.A.1.9) family. In terms of tissue distribution, expressed at low levels in roots.

It is found in the membrane. Functionally, high-affinity transporter for external inorganic phosphate. This is Probable inorganic phosphate transporter 1-4 (PHT1-4) from Oryza sativa subsp. japonica (Rice).